Consider the following 73-residue polypeptide: Disintegrin trigramin-beta-2 (73 aa).

The 73-residue stretch at 1 to 73 (EAGKDCDCGS…AGCPRNPFHA (73 aa)) folds into the Disintegrin domain. Intrachain disulfides connect Cys6-Cys21, Cys8-Cys16, Cys15-Cys38, Cys29-Cys35, Cys34-Cys59, and Cys47-Cys66. A Cell attachment site motif is present at residues 51 to 53 (RGD).

Belongs to the venom metalloproteinase (M12B) family. P-II subfamily. P-IIa sub-subfamily. In terms of assembly, monomer (disintegrin). Expressed by the venom gland.

The protein localises to the secreted. Its function is as follows. Inhibits fibrinogen interaction with platelets. Acts by binding to the alpha-IIb/beta-3 receptor (ITGA2B/ITGB3) on the platelet surface and inhibits aggregation induced by ADP, thrombin, platelet-activating factor and collagen. This Craspedocephalus gramineus (Bamboo pit viper) protein is Disintegrin trigramin-beta-2.